A 464-amino-acid chain; its full sequence is UDP-N-acetylmuramoylalanine--D-glutamate ligase (464 aa).

112-118 (GTDGKTT) contributes to the ATP binding site.

Belongs to the MurCDEF family.

Its subcellular location is the cytoplasm. The catalysed reaction is UDP-N-acetyl-alpha-D-muramoyl-L-alanine + D-glutamate + ATP = UDP-N-acetyl-alpha-D-muramoyl-L-alanyl-D-glutamate + ADP + phosphate + H(+). The protein operates within cell wall biogenesis; peptidoglycan biosynthesis. Functionally, cell wall formation. Catalyzes the addition of glutamate to the nucleotide precursor UDP-N-acetylmuramoyl-L-alanine (UMA). The chain is UDP-N-acetylmuramoylalanine--D-glutamate ligase from Pelodictyon phaeoclathratiforme (strain DSM 5477 / BU-1).